The following is a 337-amino-acid chain: tRNA N6-adenosine threonylcarbamoyltransferase (337 aa).

Residues His110 and His114 each contribute to the Fe cation site. Substrate is bound by residues 133-137 (LVSGK), Asp166, Gly179, and Asn271. Asp300 is a binding site for Fe cation.

The protein belongs to the KAE1 / TsaD family. Requires Fe(2+) as cofactor.

It is found in the cytoplasm. The enzyme catalyses L-threonylcarbamoyladenylate + adenosine(37) in tRNA = N(6)-L-threonylcarbamoyladenosine(37) in tRNA + AMP + H(+). Functionally, required for the formation of a threonylcarbamoyl group on adenosine at position 37 (t(6)A37) in tRNAs that read codons beginning with adenine. Is involved in the transfer of the threonylcarbamoyl moiety of threonylcarbamoyl-AMP (TC-AMP) to the N6 group of A37, together with TsaE and TsaB. TsaD likely plays a direct catalytic role in this reaction. The chain is tRNA N6-adenosine threonylcarbamoyltransferase from Buchnera aphidicola subsp. Schizaphis graminum (strain Sg).